The following is a 163-amino-acid chain: MAEDGPQKQQLDMPLVLDQDLTKQMRLRVESLKQRGEKKQDGEKLLRPAESVYRLDFIQQQKLQFDHWNVVLDKPGKVTITGTSQNWTPDLTNLMTRQLLDPAAIFWRKEDSDAMDWNEADALEFGERLSDLAKIRKVMYFLITFGEGVEPANLKASVVFNQL.

Residue A2 is modified to N-acetylalanine.

This sequence belongs to the olfactory marker protein family. In terms of assembly, interacts with BEX1 and BEX2. As to expression, uniquely associated with mature olfactory receptor neurons.

Its subcellular location is the cytoplasm. May act as a modulator of the olfactory signal-transduction cascade. This is Olfactory marker protein (Omp) from Rattus norvegicus (Rat).